Here is a 258-residue protein sequence, read N- to C-terminus: MPYERDCLDNDVRLRAQNLRTHEINLAPYVPGATLRADIIAKYPDGRYKVFDFTAPNFIKGVISYKEFAWHYGHTYDNDDQLDDHNANTFNNVTLANSGSTNPPRDITYPETVMIVLNGNFNIAQCRAFPVNQYGLTHKDWRLSRNNSPDPIHNCQWTPIGCYSNFFVMKFNQREGLRFILPACSDSAYNQYNSGTLAEIIWETVKHKTVKWFTGERQAINWFTQKNLAYPDSANFIASRAEANYIGNGNFSDPSRYY.

As to quaternary structure, forms crystal-like bodies by self-assembly.

Functionally, major component of the virus occlusion bodies, which are large proteinaceous structures (polyhedra), that protect the virus from the outside environment for extended periods until they are ingested by insect larvae. This is Polyhedrin from Choristoneura fumiferana cypovirus (CfCPV).